Reading from the N-terminus, the 397-residue chain is Arginine biosynthesis bifunctional protein ArgJ (397 aa).

Thr147, Lys173, Thr184, Glu270, Asn392, and Thr397 together coordinate substrate. Thr184 (nucleophile) is an active-site residue.

The protein belongs to the ArgJ family. Heterotetramer of two alpha and two beta chains.

Its subcellular location is the cytoplasm. It catalyses the reaction N(2)-acetyl-L-ornithine + L-glutamate = N-acetyl-L-glutamate + L-ornithine. The enzyme catalyses L-glutamate + acetyl-CoA = N-acetyl-L-glutamate + CoA + H(+). It functions in the pathway amino-acid biosynthesis; L-arginine biosynthesis; L-ornithine and N-acetyl-L-glutamate from L-glutamate and N(2)-acetyl-L-ornithine (cyclic): step 1/1. The protein operates within amino-acid biosynthesis; L-arginine biosynthesis; N(2)-acetyl-L-ornithine from L-glutamate: step 1/4. Catalyzes two activities which are involved in the cyclic version of arginine biosynthesis: the synthesis of N-acetylglutamate from glutamate and acetyl-CoA as the acetyl donor, and of ornithine by transacetylation between N(2)-acetylornithine and glutamate. The protein is Arginine biosynthesis bifunctional protein ArgJ of Streptococcus mutans serotype c (strain ATCC 700610 / UA159).